The primary structure comprises 152 residues: UPF0266 membrane protein CKO_01158 (152 aa).

Helical transmembrane passes span 6 to 26, 45 to 65, and 67 to 87; these read LVLVLFIVALLAYAIYDQFIM, VDSVIFVGLVAILIYNNVTSH, and AQITTWLLCALALMGFYIFWV.

It belongs to the UPF0266 family.

The protein resides in the cell inner membrane. In Citrobacter koseri (strain ATCC BAA-895 / CDC 4225-83 / SGSC4696), this protein is UPF0266 membrane protein CKO_01158.